The following is a 102-amino-acid chain: MSARVRSRSRGRGDGQEAPDVVAFVAPGESQQEEPPTDNQDIEPGQEREGTPPIEERKVEGDCQEMDLEKTRSERGDGSDVKEKTPPNPKHAKTKEAGDGQP.

Positions 1 to 10 are enriched in basic residues; that stretch reads MSARVRSRSR. The segment at 1–102 is disordered; sequence MSARVRSRSR…KTKEAGDGQP (102 aa). At serine 7 the chain carries Phosphoserine; by CLK2. At serine 9 the chain carries Phosphoserine; by HIPK1 and CLK2. Residues 45–85 show a composition bias toward basic and acidic residues; the sequence is GQEREGTPPIEERKVEGDCQEMDLEKTRSERGDGSDVKEKT. Threonine 51 is modified (phosphothreonine; by HIPK1 and CLK2). At threonine 71 the chain carries Phosphothreonine; by CLK2. Phosphoserine; by CLK2 is present on residues serine 73 and serine 79. A phosphothreonine; by CLK2 mark is found at threonine 85 and threonine 94.

The protein belongs to the GAGE family. As to quaternary structure, interacts with JUN. HIPK1-mediated phosphorylation at Thr-51 leads to the compaction of its intrinsically disordered conformation and is critical for its ability to potentiate the transcriptional activator activity of JUN inspite of a reduced interaction with JUN. CLK2-mediated phosphorylation at multiple Ser and Thr residues attenuates its ability to potentiate JUN transcriptional activator activity. Expressed at basal lvels in the adult normal prostate gland but is highly up-regulated in the fetal prostate and prostate cancer cells. Preferentially expressed in normal male and female reproductive tissues, testis, fallopian tube, uterus, and placenta, as well as in testicular cancer, uterine cancer, cervical cancer and kidney cancer.

It localises to the cytoplasm. It is found in the nucleus. The protein localises to the mitochondrion. Intrinsically disordered protein that potentiates the transcriptional activator activity of JUN. Protects cells from stress-induced apoptosis by inhibiting reactive oxygen species (ROS) production and via regulation of the MAPK signaling pathway. This chain is P antigen family member 4 (PAGE4), found in Homo sapiens (Human).